Consider the following 284-residue polypeptide: uncharacterized protein (284 aa).

The N-terminal stretch at 1-21 is a signal peptide; that stretch reads MKTTMLMLVLLVCSYIHYVCA. 3 consecutive transmembrane segments (helical) span residues 88–108, 144–164, and 212–232; these read AGPF…FLWA, ALGV…LGVW, and VFTT…SPTY.

The protein resides in the membrane. This is an uncharacterized protein from Schizosaccharomyces pombe (strain 972 / ATCC 24843) (Fission yeast).